The chain runs to 269 residues: Phosphatidylglycerol--prolipoprotein diacylglyceryl transferase (269 aa).

Transmembrane regions (helical) follow at residues 10 to 30, 56 to 76, 91 to 111, 126 to 146, 172 to 192, 200 to 220, and 237 to 257; these read IAVS…LIGF, AIFY…ILFY, IWEG…AMFF, FLAP…FIGG, PSQL…LWFF, YCVS…VEFV, and EGQL…MAGL. Position 139 (Arg139) interacts with a 1,2-diacyl-sn-glycero-3-phospho-(1'-sn-glycerol).

Belongs to the Lgt family.

It is found in the cell inner membrane. It carries out the reaction L-cysteinyl-[prolipoprotein] + a 1,2-diacyl-sn-glycero-3-phospho-(1'-sn-glycerol) = an S-1,2-diacyl-sn-glyceryl-L-cysteinyl-[prolipoprotein] + sn-glycerol 1-phosphate + H(+). The protein operates within protein modification; lipoprotein biosynthesis (diacylglyceryl transfer). Functionally, catalyzes the transfer of the diacylglyceryl group from phosphatidylglycerol to the sulfhydryl group of the N-terminal cysteine of a prolipoprotein, the first step in the formation of mature lipoproteins. This is Phosphatidylglycerol--prolipoprotein diacylglyceryl transferase from Marinomonas sp. (strain MWYL1).